The following is a 426-amino-acid chain: Pannexin-1 (426 aa).

Residues 1–40 (MAIAHLATEYVFSDFLLKEPTEPKFKGLRLELAVDKMVTC) are Cytoplasmic-facing. Cys40 carries the post-translational modification S-nitrosocysteine. The chain crosses the membrane as a helical span at residues 41–61 (IAVGLPLLLISLAFAQEISIG). Residues 62 to 106 (TQISCFSPSSFSWRQAAFVDSYCWAAVQQKNSLQSESGNLPLWLH) lie on the Extracellular side of the membrane. 2 disulfides stabilise this stretch: Cys66–Cys264 and Cys84–Cys245. A helical transmembrane segment spans residues 107 to 127 (KFFPYILLLFAILLYLPALFW). The Cytoplasmic segment spans residues 128 to 216 (RFAAAPHLCS…HLIMKYISCR (89 aa)). Tyr198 bears the Phosphotyrosine mark. The helical transmembrane segment at 217 to 237 (LVTFAVVLLACIYLSYYFSLS) threads the bilayer. Over 238–277 (SLSDEFLCSIKSGVLRNDSTIPDSFQCKLIAVGIFQLLSL) the chain is Extracellular. An N-linked (GlcNAc...) asparagine glycan is attached at Asn254. A helical membrane pass occupies residues 278 to 298 (INLLVYALLVPVVIYTLFVPF). Residues 299 to 426 (RQKTDVLKVY…SRQRLLNSSC (128 aa)) lie on the Cytoplasmic side of the membrane. An S-nitrosocysteine modification is found at Cys346. A disordered region spans residues 407–426 (ETAANNGEKNSRQRLLNSSC).

Belongs to the pannexin family. In terms of assembly, homoheptameric. In terms of processing, S-nitrosylation inhibits channel currents and ATP release. N-glycosylation plays a role in cell surface targeting. Glycosylation at its extracellular surface makes unlikely that two oligomers could dock to form an intercellular channel such as in gap junctions. Exists in three glycosylation states: non-glycosylated (GLY0), high-mannose glycosylated (GLY1), and fully mature glycosylated (GLY2). Post-translationally, cleaved by CASP3 and CASP7 during apoptosis. Cleavage opens the channel for the release of metabolites and induces plasma membrane permeability during apoptosis. In terms of processing, phosphorylated at Tyr-198 by SRC. Phosphorylation activates ATP release. Constitutively phosphorylated in vascular smooth muscle cells. Expressed in the eye, thyroid, prostate, kidney and liver. Abundantly expressed in the CNS, including hippocampus, olfactory bulb, cortex, cerebellum and white matter.

It is found in the cell membrane. Its subcellular location is the endoplasmic reticulum membrane. It catalyses the reaction Ca(2+)(in) = Ca(2+)(out). It carries out the reaction ATP(in) = ATP(out). The enzyme catalyses K(+)(in) = K(+)(out). The catalysed reaction is chloride(in) = chloride(out). It catalyses the reaction iodide(out) = iodide(in). It carries out the reaction Na(+)(in) = Na(+)(out). The enzyme catalyses nitrate(in) = nitrate(out). The catalysed reaction is L-aspartate(out) = L-aspartate(in). It catalyses the reaction L-glutamate(out) = L-glutamate(in). It carries out the reaction D-gluconate(in) = D-gluconate(out). The enzyme catalyses spermidine(in) = spermidine(out). Its function is as follows. Ion channel involved in a variety of physiological functions such as blood pressure regulation, apoptotic cell clearance and oogenesis. Forms anion-selective channels with relatively low conductance and an order of permeabilities: nitrate&gt;iodide&gt;chlroride&gt;&gt;aspartate=glutamate=gluconate. Can release ATP upon activation through phosphorylation or cleavage at C-terminus. May play a role as a Ca(2+)-leak channel to regulate ER Ca(2+) homeostasis. During apoptosis, the C terminal tail is cleaved by caspases, which opens the main pore acting as a large-pore ATP efflux channel with a broad distribution, which allows the regulated release of molecules and ions smaller than 1 kDa, such as nucleotides ATP and UTP, and selective plasma membrane permeability to attract phagocytes that engulf the dying cells. The polypeptide is Pannexin-1 (Panx1) (Rattus norvegicus (Rat)).